Consider the following 882-residue polypeptide: DNA mismatch repair protein MutS (882 aa).

An ATP-binding site is contributed by G656–S663.

This sequence belongs to the DNA mismatch repair MutS family.

This protein is involved in the repair of mismatches in DNA. It is possible that it carries out the mismatch recognition step. This protein has a weak ATPase activity. The protein is DNA mismatch repair protein MutS of Synechococcus sp. (strain ATCC 27144 / PCC 6301 / SAUG 1402/1) (Anacystis nidulans).